The chain runs to 118 residues: Large ribosomal subunit protein bL21c (118 aa).

Belongs to the bacterial ribosomal protein bL21 family. In terms of assembly, part of the 50S ribosomal subunit.

The protein resides in the plastid. Its subcellular location is the chloroplast. Its function is as follows. This protein binds to 23S rRNA. In Psilotum nudum (Whisk fern), this protein is Large ribosomal subunit protein bL21c.